The chain runs to 514 residues: L-carnitine/gamma-butyrobetaine antiporter (514 aa).

Residues 1–11 are Cytoplasmic-facing; the sequence is MSKDNKKAGIE. The helical transmembrane segment at 12 to 30 threads the bilayer; the sequence is PKVFFPPLIIVGILCWLTV. The Periplasmic segment spans residues 31–42; sequence RDLDASNEVINA. The helical transmembrane segment at 43 to 68 threads the bilayer; it reads VFSYVTNVWGWAFEWYMVIMFGGWFW. The Cytoplasmic segment spans residues 69–91; it reads LVFGRYAKKRLGDEKPEFSTASW. A helical membrane pass occupies residues 92–112; it reads IFMMFASCTSAAVLFWGSIEI. Residues 113–131 lie on the Periplasmic side of the membrane; the sequence is YYYISSPPFGMEGYSAPAK. The helical transmembrane segment at 132–154 threads the bilayer; the sequence is EIGLAYSLFHWGPLPWATYSFLS. Residues 155–185 lie on the Cytoplasmic side of the membrane; that stretch reads VAFAYFFFVRKMEVIRPSSTLTPLVGEKHVN. Residues 186 to 216 traverse the membrane as a helical segment; the sequence is GLFGTVVDNFYLVALILAMGTSLGLATPLVT. At 217–230 the chain is on the periplasmic side; the sequence is ECIQYLFGIPHTLQ. Residues 231–249 form a helical membrane-spanning segment; the sequence is LDAIIISCWILLNAICVAF. Residues 250–251 are Cytoplasmic-facing; the sequence is GL. A helical membrane pass occupies residues 252-277; it reads QKGVKIASDVRTYLSFLMLGWVFIVG. At 278-311 the chain is on the periplasmic side; sequence GASFIVNYFTDSVGTLLMYMPRMLFYTDPIGKGG. Residues 312 to 335 form a helical membrane-spanning segment; it reads FPQAWTVFYWAWWVIYAIQMSIFL. The Cytoplasmic segment spans residues 336–347; sequence ARISKGRTVREL. A helical transmembrane segment spans residues 348-369; the sequence is CLGMVSGLTAGTWLIWTILGGN. The Periplasmic portion of the chain corresponds to 370–404; that stretch reads TLQLIDQNILNIPQLIDQYGVPRAIIETWAALPLS. Residues 405 to 434 traverse the membrane as a helical segment; the sequence is TATMWGFFILCFIATVTLINACSYTLAMST. Residues 435–445 lie on the Cytoplasmic side of the membrane; sequence CRSMKEGAEPP. The chain crosses the membrane as a helical span at residues 446-464; that stretch reads LLVRIGWSVLVGIIGIILL. At 465–468 the chain is on the periplasmic side; it reads ALGG. A helical transmembrane segment spans residues 469-492; sequence LKPIQTAIIAGGCPLFFVNIMVTL. Residues 493–514 are Cytoplasmic-facing; the sequence is SFIKDAKVHWKDCSPYTQKMTH.

It belongs to the BCCT transporter (TC 2.A.15) family. CaiT subfamily. Homotrimer.

The protein resides in the cell inner membrane. It catalyses the reaction 4-(trimethylamino)butanoate(in) + (R)-carnitine(out) = 4-(trimethylamino)butanoate(out) + (R)-carnitine(in). The protein operates within amine and polyamine metabolism; carnitine metabolism. In terms of biological role, catalyzes the exchange of L-carnitine for gamma-butyrobetaine. This is L-carnitine/gamma-butyrobetaine antiporter from Proteus mirabilis (strain HI4320).